A 524-amino-acid polypeptide reads, in one-letter code: Serine/threonine-protein kinase PAK 2 (524 aa).

The disordered stretch occupies residues 1 to 81; that stretch reads MSDNGELEDK…PEISPPSDFE (81 aa). An N-acetylserine modification is found at serine 2. A phosphoserine mark is found at serine 2, serine 20, serine 55, and serine 58. Phosphothreonine is present on threonine 60. Lysine 62 bears the N6-acetyllysine mark. Position 64 is a phosphoserine (serine 64). Residues 67-81 are compositionally biased toward basic and acidic residues; that stretch reads KEKERPEISPPSDFE. A GTPase-binding region spans residues 69 to 112; that stretch reads KERPEISPPSDFEHTIHVGFDAVTGEFTGMPEQWARLLQTSNIT. The interval 69–137 is autoregulatory region; the sequence is KERPEISPPS…KFYDSNTVKQ (69 aa). Residues 74 to 87 form the CRIB domain; sequence ISPPSDFEHTIHVG. Lysine 128 is subject to N6-acetyllysine. Residue threonine 134 is modified to Phosphothreonine. Tyrosine 139 is subject to Phosphotyrosine. Serine 141 bears the Phosphoserine mark. The segment at 142–188 is disordered; sequence FTPPEKDGFPSGTPALNTKGSETSAVVTEEDDDDEDAAPPVIAPRPD. Threonine 143 is subject to Phosphothreonine. Serine 152 is subject to Phosphoserine. 3 positions are modified to phosphothreonine: threonine 154, threonine 159, and threonine 169. A compositionally biased stretch (polar residues) spans 155–167; sequence PALNTKGSETSAV. Residues 169–178 show a composition bias toward acidic residues; sequence TEEDDDDEDA. The residue at position 197 (serine 197) is a Phosphoserine. Positions 204–228 are disordered; that stretch reads APVGDSNVDSGAKSSDKQKKKAKMT. The Nuclear localization signal motif lies at 245-251; the sequence is PKKKYTR. Residues 249–499 enclose the Protein kinase domain; that stretch reads YTRYEKIGQG…SAKELLQHPF (251 aa). ATP-binding positions include 255 to 263 and lysine 278; that span reads IGQGASGTV. Arginine 367 functions as the Proton acceptor in the catalytic mechanism. Threonine 402 carries the post-translational modification Phosphothreonine; by autocatalysis.

The protein belongs to the protein kinase superfamily. STE Ser/Thr protein kinase family. STE20 subfamily. Interacts tightly with GTP-bound but not GDP-bound CDC42/p21 and RAC1. Interacts with SH3MD4. Interacts with SCRIB. Interacts with ARHGEF7 and GIT1. PAK-2p34 interacts with ARHGAP10. Interacts with RAC1. In terms of processing, full-length PAK2 is autophosphorylated when activated by CDC42/p21. Following cleavage, both peptides, PAK-2p27 and PAK-2p34, become highly autophosphorylated. Autophosphorylation of PAK-2p27 can occur in the absence of any effectors and is dependent on phosphorylation of Thr-402, because PAK-2p27 is acting as an exogenous substrate. Post-translationally, during apoptosis proteolytically cleaved by caspase-3 or caspase-3-like proteases to yield active PAK-2p34. Ubiquitinated, leading to its proteasomal degradation.

It is found in the cytoplasm. The protein resides in the nucleus. Its subcellular location is the perinuclear region. The protein localises to the membrane. The catalysed reaction is L-seryl-[protein] + ATP = O-phospho-L-seryl-[protein] + ADP + H(+). It carries out the reaction L-threonyl-[protein] + ATP = O-phospho-L-threonyl-[protein] + ADP + H(+). With respect to regulation, activated by binding small G proteins. Binding of GTP-bound CDC42 or RAC1 to the autoregulatory region releases monomers from the autoinhibited dimer, enables phosphorylation of Thr-402 and allows the kinase domain to adopt an active structure. Following caspase cleavage, autophosphorylated PAK-2p34 is constitutively active. In terms of biological role, serine/threonine protein kinase that plays a role in a variety of different signaling pathways including cytoskeleton regulation, cell motility, cell cycle progression, apoptosis or proliferation. Acts as a downstream effector of the small GTPases CDC42 and RAC1. Activation by the binding of active CDC42 and RAC1 results in a conformational change and a subsequent autophosphorylation on several serine and/or threonine residues. Full-length PAK2 stimulates cell survival and cell growth. Phosphorylates MAPK4 and MAPK6 and activates the downstream target MAPKAPK5, a regulator of F-actin polymerization and cell migration. Phosphorylates JUN and plays an important role in EGF-induced cell proliferation. Phosphorylates many other substrates including histone H4 to promote assembly of H3.3 and H4 into nucleosomes, BAD, ribosomal protein S6, or MBP. Phosphorylates CASP7, thereby preventing its activity. Additionally, associates with ARHGEF7 and GIT1 to perform kinase-independent functions such as spindle orientation control during mitosis. On the other hand, apoptotic stimuli such as DNA damage lead to caspase-mediated cleavage of PAK2, generating PAK-2p34, an active p34 fragment that translocates to the nucleus and promotes cellular apoptosis involving the JNK signaling pathway. Caspase-activated PAK2 phosphorylates MKNK1 and reduces cellular translation. The polypeptide is Serine/threonine-protein kinase PAK 2 (Pak2) (Mus musculus (Mouse)).